The sequence spans 75 residues: UPF0270 protein PSPPH_1506 (75 aa).

Belongs to the UPF0270 family.

The chain is UPF0270 protein PSPPH_1506 from Pseudomonas savastanoi pv. phaseolicola (strain 1448A / Race 6) (Pseudomonas syringae pv. phaseolicola (strain 1448A / Race 6)).